Reading from the N-terminus, the 328-residue chain is Phosphate acyltransferase (328 aa).

Belongs to the PlsX family. In terms of assembly, homodimer. Probably interacts with PlsY.

Its subcellular location is the cytoplasm. The enzyme catalyses a fatty acyl-[ACP] + phosphate = an acyl phosphate + holo-[ACP]. It functions in the pathway lipid metabolism; phospholipid metabolism. Its function is as follows. Catalyzes the reversible formation of acyl-phosphate (acyl-PO(4)) from acyl-[acyl-carrier-protein] (acyl-ACP). This enzyme utilizes acyl-ACP as fatty acyl donor, but not acyl-CoA. The polypeptide is Phosphate acyltransferase (Staphylococcus haemolyticus (strain JCSC1435)).